The sequence spans 279 residues: Tryptophan synthase alpha chain (279 aa).

Residues glutamate 50 and aspartate 61 each act as proton acceptor in the active site.

The protein belongs to the TrpA family. As to quaternary structure, tetramer of two alpha and two beta chains.

It catalyses the reaction (1S,2R)-1-C-(indol-3-yl)glycerol 3-phosphate + L-serine = D-glyceraldehyde 3-phosphate + L-tryptophan + H2O. It functions in the pathway amino-acid biosynthesis; L-tryptophan biosynthesis; L-tryptophan from chorismate: step 5/5. Functionally, the alpha subunit is responsible for the aldol cleavage of indoleglycerol phosphate to indole and glyceraldehyde 3-phosphate. This chain is Tryptophan synthase alpha chain, found in Brucella suis biovar 1 (strain 1330).